A 182-amino-acid chain; its full sequence is Adenine phosphoribosyltransferase (182 aa).

It belongs to the purine/pyrimidine phosphoribosyltransferase family. As to quaternary structure, homodimer.

Its subcellular location is the cytoplasm. The enzyme catalyses AMP + diphosphate = 5-phospho-alpha-D-ribose 1-diphosphate + adenine. Its pathway is purine metabolism; AMP biosynthesis via salvage pathway; AMP from adenine: step 1/1. Its function is as follows. Catalyzes a salvage reaction resulting in the formation of AMP, that is energically less costly than de novo synthesis. The polypeptide is Adenine phosphoribosyltransferase (Streptomyces avermitilis (strain ATCC 31267 / DSM 46492 / JCM 5070 / NBRC 14893 / NCIMB 12804 / NRRL 8165 / MA-4680)).